A 227-amino-acid chain; its full sequence is Uracil-DNA glycosylase (227 aa).

Catalysis depends on D68, which acts as the Proton acceptor.

It belongs to the uracil-DNA glycosylase (UDG) superfamily. UNG family.

It localises to the cytoplasm. The enzyme catalyses Hydrolyzes single-stranded DNA or mismatched double-stranded DNA and polynucleotides, releasing free uracil.. Excises uracil residues from the DNA which can arise as a result of misincorporation of dUMP residues by DNA polymerase or due to deamination of cytosine. The chain is Uracil-DNA glycosylase from Mycolicibacterium smegmatis (strain ATCC 700084 / mc(2)155) (Mycobacterium smegmatis).